Here is a 110-residue protein sequence, read N- to C-terminus: DNA-directed RNA polymerase subunit omega (110 aa).

The protein belongs to the RNA polymerase subunit omega family. The RNAP catalytic core consists of 2 alpha, 1 beta, 1 beta' and 1 omega subunit. When a sigma factor is associated with the core the holoenzyme is formed, which can initiate transcription.

It catalyses the reaction RNA(n) + a ribonucleoside 5'-triphosphate = RNA(n+1) + diphosphate. Promotes RNA polymerase assembly. Latches the N- and C-terminal regions of the beta' subunit thereby facilitating its interaction with the beta and alpha subunits. This is DNA-directed RNA polymerase subunit omega (rpoZ) from Mycobacterium bovis (strain ATCC BAA-935 / AF2122/97).